Reading from the N-terminus, the 214-residue chain is Adenylate kinase (214 aa).

Position 10 to 15 (10 to 15) interacts with ATP; it reads GAGKGT. An NMP region spans residues 30–59; it reads STGDMLRAAIKAGTELGLKAKAVMDAGQLV. AMP contacts are provided by residues T31, R36, 57–59, 85–88, and Q92; these read QLV and GFPR. The tract at residues 122–159 is LID; that stretch reads GRRVHSGSGRTYHVVFNPPKVEGKDDVTGEDLVIRADD. ATP is bound by residues R123 and 132–133; that span reads TY. The AMP site is built by R156 and R167. ATP is bound at residue Q200.

Belongs to the adenylate kinase family. Monomer.

The protein localises to the cytoplasm. It catalyses the reaction AMP + ATP = 2 ADP. It participates in purine metabolism; AMP biosynthesis via salvage pathway; AMP from ADP: step 1/1. Catalyzes the reversible transfer of the terminal phosphate group between ATP and AMP. Plays an important role in cellular energy homeostasis and in adenine nucleotide metabolism. This is Adenylate kinase from Aeromonas hydrophila subsp. hydrophila (strain ATCC 7966 / DSM 30187 / BCRC 13018 / CCUG 14551 / JCM 1027 / KCTC 2358 / NCIMB 9240 / NCTC 8049).